Here is a 95-residue protein sequence, read N- to C-terminus: Bombyxin C-2 (95 aa).

Residues 1-19 form the signal peptide; it reads MKLVILLVVVSAMLVLGGA. Gln-20 is subject to Pyrrolidone carboxylic acid. 3 disulfides stabilise this stretch: Cys-27–Cys-76, Cys-39–Cys-89, and Cys-75–Cys-80. Positions 47 to 67 are cleaved as a propeptide — c peptide like; it reads SGSQYAGYGWPWLPPFSSSRG.

This sequence belongs to the insulin family. As to quaternary structure, heterodimer of a B chain and an A chain linked by two disulfide bonds.

The protein localises to the secreted. Brain peptide responsible for activation of prothoracic glands to produce ecdysone in insects. This Bombyx mori (Silk moth) protein is Bombyxin C-2 (BBXC2).